We begin with the raw amino-acid sequence, 192 residues long: A-type ATP synthase subunit E (192 aa).

This sequence belongs to the V-ATPase E subunit family. As to quaternary structure, has multiple subunits with at least A(3), B(3), C, D, E, F, H, I and proteolipid K(x).

The protein resides in the cell membrane. Component of the A-type ATP synthase that produces ATP from ADP in the presence of a proton gradient across the membrane. This chain is A-type ATP synthase subunit E, found in Methanocorpusculum labreanum (strain ATCC 43576 / DSM 4855 / Z).